Consider the following 3750-residue polypeptide: Cubilin homolog (3750 aa).

The first 28 residues, 1 to 28, serve as a signal peptide directing secretion; the sequence is MEGAARSRLLLCWTLLAIITDTWPIAEG. N-linked (GlcNAc...) asparagine glycosylation is found at N51 and N123. The region spanning 154–190 is the EGF-like 1 domain; the sequence is EANSCASGPCENGGTCYNTYTGFRCQCRSAFEGTKCE. 6 disulfides stabilise this stretch: C158/C169, C163/C178, C180/C189, C196/C212, C206/C221, and C223/C232. One can recognise an EGF-like 2; calcium-binding domain in the interval 192–233; sequence DVNECALYEGTDLGCQNGGQCQNHFGTYSCLCQPGWHGMHCT. The 27-residue stretch at 282–308 folds into the EGF-like 3; calcium-binding domain; that stretch reads DVDECSDSAAHKPCSTSCINLPGSFTC. The 29-residue stretch at 324–352 folds into the EGF-like 4; calcium-binding domain; sequence DLDECQTNNGGCSLSPKVDCINTYGSYHC. The N-linked (GlcNAc...) asparagine glycan is linked to N424. 2 EGF-like domains span residues 426 to 463 and 465 to 503; these read TTTN…PICE and QPSP…RLCE. 7 cysteine pairs are disulfide-bonded: C430-C441, C435-C451, C453-C462, C469-C480, C474-C491, C493-C502, and C509-C535. A glycan (N-linked (GlcNAc...) asparagine) is linked at N448. CUB domains are found at residues 509–623, 627–738, 744–852, 853–971, 978–1095, 1100–1212, 1216–1331, 1332–1434, 1439–1550, 1554–1670, 1671–1788, 1792–1902, and 1903–2001; these read CNGM…WNSM, CGGR…YSVE, CGGV…YRMA, CDYK…YRAL, CGGV…YTFE, CGGH…WRIF, CGGS…YKAN, CIRN…QLDY, CMEE…YRTV, CGGK…FHES, CGQT…YMTM, CGSI…YNYE, and HHNE…WNRL. N542 and N548 each carry an N-linked (GlcNAc...) asparagine glycan. The cysteines at positions 562 and 584 are disulfide-linked. N-linked (GlcNAc...) asparagine glycosylation occurs at N609. Intrachain disulfides connect C627/C654, C681/C701, C744/C770, C853/C879, C913/C933, and C978/C1004. N871 carries N-linked (GlcNAc...) asparagine glycosylation. Residues E1026, D1034, and D1080 each coordinate Ca(2+). Cysteines 1031 and 1058 form a disulfide. C1100 and C1126 are oxidised to a cystine. N-linked (GlcNAc...) asparagine glycosylation occurs at N1119. E1148 lines the Ca(2+) pocket. Residue N1152 is glycosylated (N-linked (GlcNAc...) asparagine). A disulfide bridge links C1153 with C1175. 2 residues coordinate Ca(2+): D1156 and D1197. C1216 and C1242 are oxidised to a cystine. 3 residues coordinate Ca(2+): E1264, D1272, and D1316. The cysteines at positions 1269 and 1292 are disulfide-linked. A disulfide bond links C1332 and C1360. N-linked (GlcNAc...) asparagine glycans are attached at residues N1335, N1359, N1413, and N1424. An intrachain disulfide couples C1439 to C1465. N1491 carries an N-linked (GlcNAc...) asparagine glycan. 7 disulfides stabilise this stretch: C1492–C1513, C1554–C1580, C1607–C1631, C1671–C1697, C1733–C1755, C1792–C1818, and C1845–C1866. N-linked (GlcNAc...) asparagine glycosylation is present at N1694. Residues N1908 and N2009 are each glycosylated (N-linked (GlcNAc...) asparagine). 2 disulfides stabilise this stretch: C2019–C2048 and C2077–C2100. 5 consecutive CUB domains span residues 2019 to 2139, 2140 to 2256, 2262 to 2383, 2385 to 2512, and 2516 to 2646; these read CGNQ…VRTA, CGSE…FRFE, DSGR…LSVA, CGGS…YTSL, and CGET…MNEV. Residues N2092, N2128, N2152, and N2231 are each glycosylated (N-linked (GlcNAc...) asparagine). Residues C2140 and C2167 are joined by a disulfide bond. C2324 and C2346 are oxidised to a cystine. An N-linked (GlcNAc...) asparagine glycan is attached at N2377. C2385 and C2416 are disulfide-bonded. N2442 is a glycosylation site (N-linked (GlcNAc...) asparagine). 2 disulfides stabilise this stretch: C2445-C2474 and C2516-C2542. N-linked (GlcNAc...) asparagine glycosylation is found at N2655, N2671, N2682, and N2772. 2 disulfides stabilise this stretch: C2761–C2790 and C2837–C2859. CUB domains are found at residues 2761 to 2895, 2898 to 3010, 3011 to 3128, 3130 to 3246, 3249 to 3364, 3368 to 3512, 3522 to 3615, and 3623 to 3736; these read CGGV…IKYG, CGGK…FERN, CGGL…YTSR, CGGI…VRVM, CDEK…INAI, CGSS…VALN, LQGR…YLAS, and CGGQ…FAGV. N-linked (GlcNAc...) asparagine glycosylation is found at N2885 and N2889. 2 disulfides stabilise this stretch: C2898–C2921 and C2949–C2973. Residues N2960, N2965, and N2982 are each glycosylated (N-linked (GlcNAc...) asparagine). C3011 and C3039 form a disulfide bridge. 2 N-linked (GlcNAc...) asparagine glycosylation sites follow: N3040 and N3074. 2 cysteine pairs are disulfide-bonded: C3070-C3092 and C3130-C3157. N3160 carries an N-linked (GlcNAc...) asparagine glycan. 4 disulfide bridges follow: C3184–C3207, C3249–C3278, C3305–C3327, and C3368–C3402. The N-linked (GlcNAc...) asparagine glycan is linked to N3256. A glycan (N-linked (GlcNAc...) asparagine) is linked at N3427. C3430 and C3475 are joined by a disulfide. 3 N-linked (GlcNAc...) asparagine glycosylation sites follow: N3543, N3572, and N3645. 3 cysteine pairs are disulfide-bonded: C3560–C3579, C3623–C3649, and C3676–C3699.

In terms of tissue distribution, specifically expressed in nephrocytes.

It localises to the cell membrane. Required in the nephrocyte for normal uptake of proteins and elimination of toxins, and for maintenance of endocytic trafficking structures. May function together with Amnionless. This Drosophila melanogaster (Fruit fly) protein is Cubilin homolog.